The sequence spans 1216 residues: Phospholipase D B (1216 aa).

A compositionally biased stretch (polar residues) spans 1–14; that stretch reads MNLSQEHAINQNLH. A disordered region spans residues 1-48; that stretch reads MNLSQEHAINQNLHKNQKNEEKIEKKTINKDGRGQMNYDGEEGQGEKS. Positions 17 to 33 are enriched in basic and acidic residues; that stretch reads QKNEEKIEKKTINKDGR. 2 EF-hand domains span residues 196-231 and 232-267; these read RNAD…MCRG and TKKE…ISDI. Ca(2+)-binding residues include D209, N211, D213, K215, and E220. A PH domain is found at 347–462; it reads EINMNGQLTK…WVNAIRFHSR (116 aa). The PLD phosphodiesterase 1 domain occupies 585–612; sequence LSWSHHQKNAIIDQQIAFVGGIDICLMR. Residues H590, K592, and D597 contribute to the active site. Residues 732-844 are disordered; it reads VSYGREKPTH…GLKSKNYKNN (113 aa). Over residues 776-789 the composition is skewed to low complexity; sequence NNSTNSENSENSYS. Positions 790-813 are enriched in acidic residues; sequence EFDEEDEEGNQEEEDEDEFDEFEK. The 28-residue stretch at 1036–1063 folds into the PLD phosphodiesterase 2 domain; it reads EQIYVHSKVLIVDDRVAVIGSCNINDRS. Active-site residues include H1041, K1043, and D1048.

Belongs to the phospholipase D family.

The protein localises to the cytoplasmic vesicle. The protein resides in the cytoplasm. It localises to the cell cortex. It catalyses the reaction a 1,2-diacyl-sn-glycero-3-phosphocholine + H2O = a 1,2-diacyl-sn-glycero-3-phosphate + choline + H(+). With respect to regulation, inhibited by butan-1-ol. Plays a role in cell growth. Hydrolyzes membrane phospholipids, such as PtdCho (phosphatidylcholine), producing the free headgroup and PtdOH (phosphatidic acid; signaling molecule on its own). Involved in the inhibition of actin-based motility and endocytosis. Its inhibition causes complete collapse of F-actin organization. Plays an important role in cell migration by localizing along the anterior cell membrane. Overexpression leads to the inability to aggregate even at higher cell density. Also known as a negative regulator of quorum sensing. The polypeptide is Phospholipase D B (pldB) (Dictyostelium discoideum (Social amoeba)).